The sequence spans 909 residues: Disintegrin and metalloproteinase domain-containing protein 12 (909 aa).

Positions 1-28 (MAARPLPVSPARALLLALAGALLAPCEA) are cleaved as a signal peptide. Residues 29–207 (RGVSLWNQGR…SQTWARRHKR (179 aa)) constitute a propeptide that is removed on maturation. N-linked (GlcNAc...) asparagine glycosylation is found at Asn-111 and Asn-149. The short motif at 177–184 (GSCGSHHN) is the Cysteine switch element. Zn(2+)-binding residues include Cys-179 and His-350. The Extracellular portion of the chain corresponds to 208 to 708 (ETLKATKYVE…GPIRQADNQG (501 aa)). One can recognise a Peptidase M12B domain in the interval 214 to 416 (KYVELVIVAD…GMGVCLFNLP (203 aa)). Disulfide bonds link Cys-325-Cys-411, Cys-367-Cys-395, and Cys-369-Cys-378. Glu-351 is an active-site residue. The Zn(2+) site is built by His-354 and His-360. Asn-381 and Asn-452 each carry an N-linked (GlcNAc...) asparagine glycan. Residues 424 to 510 (GQKCGNRFVE…HCPANVYLHD (87 aa)) enclose the Disintegrin domain. A disulfide bond links Cys-482 and Cys-502. A glycan (N-linked (GlcNAc...) asparagine) is linked at Asn-651. In terms of domain architecture, EGF-like spans 656 to 688 (GVHECAMQCHGRGVCNNRKNCHCEAHWAPPFCD). Intrachain disulfides connect Cys-660/Cys-670, Cys-664/Cys-676, and Cys-678/Cys-687. A helical transmembrane segment spans residues 709–729 (LTIGILVTILCLLAAGFVVYL). Topologically, residues 730–909 (KRKTLIRLLF…PRSTHTAYIK (180 aa)) are cytoplasmic. Positions 822–862 (LHRAPRAPSVPARPLPAKPALRQAQGTCKPNPPQKPLPADP) are disordered. The SH3-binding; class II signature appears at 828-834 (APSVPAR). The SH3-binding; class I motif lies at 834–841 (RPLPAKPA). Positions 851 to 860 (PNPPQKPLPA) are enriched in pro residues. The SH3-binding; class I motif lies at 885 to 891 (RLAPLRP). At Tyr-907 the chain carries Phosphotyrosine; by SRC.

In terms of assembly, interacts with alpha-actinin-2 and with syndecans. Interacts with SH3PXD2A. Interacts with FST3. Interacts with RACK1; the interaction is required for PKC-dependent translocation of ADAM12 to the cell membrane. The cofactor is Zn(2+). Post-translationally, the precursor is cleaved by a furin endopeptidase. As to expression, isoform 1 is expressed in placenta and skeletal, cardiac, and smooth muscle. Isoform 2 seems to be expressed only in placenta or in embryo and fetus. Both forms were expressed in some tumor cells lines. Not detected in brain, lung, liver, kidney or pancreas.

It localises to the cell membrane. It is found in the secreted. Functionally, involved in skeletal muscle regeneration, specifically at the onset of cell fusion. Also involved in macrophage-derived giant cells (MGC) and osteoclast formation from mononuclear precursors. This chain is Disintegrin and metalloproteinase domain-containing protein 12 (ADAM12), found in Homo sapiens (Human).